The following is a 256-amino-acid chain: Enkurin (256 aa).

A disordered region spans residues 48–92 (TMGPAKLEVPSPKDFLKKHSKEKTLPPKKKFDRHEPKKPPVPLRT). Positions 61–72 (DFLKKHSKEKTL) are enriched in basic and acidic residues. An SH3-binding motif is present at residues 83-89 (PKKPPVP). The Enkurin domain occupies 160–252 (KRNEEVKKAQ…VLEKHKIIYI (93 aa)). The IQ domain maps to 176–187 (IQENLRKAAMKR).

In terms of assembly, microtubule inner protein component of sperm flagellar doublet microtubules. Binds calmodulin via its IQ domain. Interacts with TRPC1, TRPC2, TRPC5, but not TRPC3. Interacts with CFAP45.

The protein localises to the cytoplasm. Its subcellular location is the cytoskeleton. The protein resides in the cilium axoneme. It localises to the flagellum axoneme. Its function is as follows. Adapter that functions to localize a calcium-sensitive signal transduction machinery in sperm to a calcium-permeable ion channel. Microtubule inner protein (MIP) part of the dynein-decorated doublet microtubules (DMTs) in cilia axoneme, which is required for motile cilia beating. This is Enkurin (ENKUR) from Sus scrofa (Pig).